Reading from the N-terminus, the 96-residue chain is NADH-ubiquinone oxidoreductase chain 4L (96 aa).

The next 3 membrane-spanning stretches (helical) occupy residues 1-21 (MELM…ALSL), 27-47 (MLAL…LVMF), and 61-81 (IILL…VVAI).

This sequence belongs to the complex I subunit 4L family.

The protein localises to the mitochondrion membrane. The catalysed reaction is a ubiquinone + NADH + 5 H(+)(in) = a ubiquinol + NAD(+) + 4 H(+)(out). Its function is as follows. Core subunit of the mitochondrial membrane respiratory chain NADH dehydrogenase (Complex I) which catalyzes electron transfer from NADH through the respiratory chain, using ubiquinone as an electron acceptor. Part of the enzyme membrane arm which is embedded in the lipid bilayer and involved in proton translocation. This is NADH-ubiquinone oxidoreductase chain 4L (MT-ND4L) from Lycodon semicarinatus (Ryukyu odd-tooth snake).